The sequence spans 239 residues: Adapter protein MecA (239 aa).

Residues 118-128 (EQRTKEKEAQG) are compositionally biased toward basic and acidic residues. The interval 118–137 (EQRTKEKEAQGSKRQKSSAR) is disordered.

This sequence belongs to the MecA family. In terms of assembly, homodimer.

In terms of biological role, enables the recognition and targeting of unfolded and aggregated proteins to the ClpC protease or to other proteins involved in proteolysis. This is Adapter protein MecA from Staphylococcus aureus (strain USA300).